A 139-amino-acid chain; its full sequence is Putative pre-16S rRNA nuclease (139 aa).

The protein belongs to the YqgF nuclease family.

It is found in the cytoplasm. Its function is as follows. Could be a nuclease involved in processing of the 5'-end of pre-16S rRNA. The protein is Putative pre-16S rRNA nuclease of Streptococcus pneumoniae serotype 19F (strain G54).